The chain runs to 1404 residues: DNA-directed RNA polymerase subunit beta' (1404 aa).

Residues cysteine 70, cysteine 72, cysteine 85, and cysteine 88 each coordinate Zn(2+). The Mg(2+) site is built by aspartate 460, aspartate 462, and aspartate 464. Zn(2+) contacts are provided by cysteine 814, cysteine 888, cysteine 895, and cysteine 898.

It belongs to the RNA polymerase beta' chain family. As to quaternary structure, the RNAP catalytic core consists of 2 alpha, 1 beta, 1 beta' and 1 omega subunit. When a sigma factor is associated with the core the holoenzyme is formed, which can initiate transcription. Mg(2+) is required as a cofactor. Zn(2+) serves as cofactor.

The enzyme catalyses RNA(n) + a ribonucleoside 5'-triphosphate = RNA(n+1) + diphosphate. In terms of biological role, DNA-dependent RNA polymerase catalyzes the transcription of DNA into RNA using the four ribonucleoside triphosphates as substrates. The polypeptide is DNA-directed RNA polymerase subunit beta' (Shewanella amazonensis (strain ATCC BAA-1098 / SB2B)).